The primary structure comprises 642 residues: Voltage-gated potassium channel KCNC2 (642 aa).

At 1 to 233 (MGKIESNERV…EDPYSSRAAR (233 aa)) the chain is on the cytoplasmic side. The segment at 45 to 98 (DCLTAAGDKLQPLPPPLSPPPRPPPLSPVPSGCFEGGAGNCSSHGGNGGNGGSD) is disordered. The segment covering 56–72 (PLPPPLSPPPRPPPLSP) has biased composition (pro residues). Positions 78–98 (FEGGAGNCSSHGGNGGNGGSD) are enriched in gly residues. Histidine 128, cysteine 134, cysteine 155, and cysteine 156 together coordinate Zn(2+). Residues 234–254 (FIAFASLFFILVSITTFCLET) traverse the membrane as a helical segment. Residues asparagine 263 and asparagine 270 are each glycosylated (N-linked (GlcNAc...) asparagine). The chain crosses the membrane as a helical span at residues 287–307 (TYVEGVCVVWFTFEFLVRIVF). Topologically, residues 308 to 317 (SPNKLEFIKN) are cytoplasmic. The chain crosses the membrane as a helical span at residues 318-338 (LLNIIDFVAILPFYLEVGLSG). The chain crosses the membrane as a helical; Voltage-sensor span at residues 350–372 (FLRVVRFVRILRIFKLTRHFVGL). Residues 373–385 (RVLGHTLRASTNE) lie on the Cytoplasmic side of the membrane. Residues 386–406 (FLLLIIFLALGVLIFATMIYY) form a helical membrane-spanning segment. Positions 441, 442, 443, and 444 each coordinate K(+). Positions 441 to 446 (TLGYGD) match the Selectivity filter motif. Residues 457–477 (VGALCALAGVLTIAMPVPVIV) form a helical membrane-spanning segment. Topologically, residues 478 to 642 (NNFGMYYSLA…RSRSPIPSIL (165 aa)) are cytoplasmic. The segment at 542-576 (SVLSGDDSTGSEPPLSPPERLPIRRSSTRDKNRRG) is disordered. Serine 604 carries the post-translational modification Phosphoserine.

The protein belongs to the potassium channel family. C (Shaw) (TC 1.A.1.2) subfamily. Kv3.2/KCNC2 sub-subfamily. As to quaternary structure, homotetramer and heterotetramer with other channel-forming alpha subunits, such as KCNC1. Interacts with KCNC1. Homotetramer or heterotetramer channel activity is regulated by association with modulating ancillary subunits such as KCNE1, KCNE2 and KCNE3, creating a functionally diverse range of channel complexes. Interacts with KCNE1, KCNE2 and KCNE3. In terms of processing, phosphorylated by PKA in cortical synaptosomes. cAMP-dependent phosphorylation inhibits channel activity. Histamine H2 receptor- and PKA-induced phosphorylation extends action potential spike duration, reduces action potential spike amplitude, sustains maximum firing frequency in hippocampal interneurons; also reduces the incidence of high-frequency oscillations in hippocampal CA3 pyramidal cell layers. In terms of tissue distribution, weakly expressed in the brain at postnatal age day 7 (P7) and increased at P60. Not detectable in newborn hippocampus. Expressed weakly at P7 in the early developing hippocampus, increasing progressively and reaching a plateau of expression at P14 that is maintained throughout P51. Expressed in paravalbumin- and somatostain-containing inhibitory interneurons of the hippocampus; in the CA1/CA3 stratum oriens-alveus and stratum pyramidale and in cells within the hilus and subgranular layer of the dentate gyrus (DG). Strongly expressed in parvalbumin (PV)-containing fast-spiking GABAergic inhibitor interneurons in deep cortical layers V and VI. Also expressed in non-fast-spiking calbindin (CB)- and/or somatostatin (SOM)-containing interneurons in deep cortical layers V and VI. Expressed in starburst amacrine cells of the retina in the inner nuclear layer (INL) and ganglion cell layer (GCL). Expressed in the suprachiasmatic nucleus (SCN) (at protein level). Expressed in the early developing brain, increasing progressively until P14.

The protein localises to the cell membrane. Its subcellular location is the membrane. The protein resides in the perikaryon. It localises to the cell projection. It is found in the axon. The protein localises to the dendrite. Its subcellular location is the postsynaptic cell membrane. The protein resides in the presynaptic cell membrane. It localises to the synapse. It is found in the synaptosome. The protein localises to the apical cell membrane. Its subcellular location is the basolateral cell membrane. The enzyme catalyses K(+)(in) = K(+)(out). Its activity is regulated as follows. Inhibited by millimolar levels of tetraethylammonium (TEA). Contrary to other channels, inhibited only by millimolar levels of 4-aminopyridine (4-AP). Inhibited by Stichodactyla helianthus peptide ShK. In terms of biological role, voltage-gated potassium channel that mediates transmembrane potassium transport in excitable membranes, primarily in the brain. Contributes to the regulation of the fast action potential repolarization and in sustained high-frequency firing in neurons of the central nervous system. Homotetramer channels mediate delayed-rectifier voltage-dependent potassium currents that activate rapidly at high-threshold voltages and inactivate slowly. Forms tetrameric channels through which potassium ions pass in accordance with their electrochemical gradient. The channel alternates between opened and closed conformations in response to the voltage difference across the membrane. Can form functional homotetrameric and heterotetrameric channels that contain variable proportions of KCNC1, and possibly other family members as well; channel properties depend on the type of alpha subunits that are part of the channel. Channel properties may be modulated by either the association with ancillary subunits, such as KCNE1, KCNE2 and KCNE3 or indirectly by nitric oxide (NO) through a cGMP- and PKG-mediated signaling cascade, slowing channel activation and deactivation of delayed rectifier potassium channels. Contributes to fire sustained trains of very brief action potentials at high frequency in thalamocortical and suprachiasmatic nucleus (SCN) neurons, in hippocampal and neocortical interneurons and in retinal ganglion cells. Sustained maximal action potential firing frequency in inhibitory hippocampal interneurons is negatively modulated by histamine H2 receptor activation in a cAMP- and protein kinase (PKA) phosphorylation-dependent manner. Plays a role in maintaining the fidelity of synaptic transmission in neocortical GABAergic interneurons by generating action potential (AP) repolarization at nerve terminals, thus reducing spike-evoked calcium influx and GABA neurotransmitter release. Required for long-range synchronization of gamma oscillations over distance in the neocortex. Contributes to the modulation of the circadian rhythm of spontaneous action potential firing in suprachiasmatic nucleus (SCN) neurons in a light-dependent manner. In Mus musculus (Mouse), this protein is Voltage-gated potassium channel KCNC2.